Here is a 197-residue protein sequence, read N- to C-terminus: MRDKLNLLIFFIAALLIALGLRFTPTISFAGLILLLAVVPALMLRFRDFFSREAVIAGIFVLGLALNALIGVALAYTKSMEFGMSLLSLLPLTLVLTANVFATSLVIRIDASGKEVFAFYFWFLISVGLAFLFLLPTGGSAEISPRGAGWFRFVEFPILYSELALIPSAFCLVFQRVRTFLFFSPFPLFLDMSWSSL.

The next 6 membrane-spanning stretches (helical) occupy residues L5–F23, I27–F46, V55–T77, L87–I109, V116–G138, and F153–F174.

It is found in the cell membrane. This is an uncharacterized protein from Archaeoglobus fulgidus (strain ATCC 49558 / DSM 4304 / JCM 9628 / NBRC 100126 / VC-16).